The following is a 431-amino-acid chain: MRGLEKQGPSATAAPCGCAQPALETGNLLTEPIGYLESCFSAKIGTPRQPSICSQSRACLKIRKSIFNNPEHSLMGLEQFSHVWILFVFHKNGHLNYKAKVQPPRLNGAKTGVFSTRSPHRPNAIGLTLAKLEKVEGGAVYLSGIDMIHGTPVLDIKPYIADYDSPQNLEPQTKHHKLRAAGPSDATANSCDQQLLSGCEKAQPCHSTKEKPKCREHRTSDENSQKFRDTSEIQHTLPEDRERAVDLALESSREETMDEPEDQLGPQELKSFLEEGTDRPRKVEGALVLRGSSAETRWDASCHARTADRVPCSVVPSWVKEAPVATLQVRFTPHAEMDLRKLSSGGASQTSFKYFHSAEEAKCAIEAMLSADPRSVYRRKLCEDRLFFFTVDIAHVTCWFGDGFAEVLRIKLASEPVEVADPEESLVALGS.

A TsaA-like domain is found at 30-168; the sequence is TEPIGYLESC…YIADYDSPQN (139 aa). Residues 47-49, 90-91, Arg-117, Leu-127, and 148-151 each bind S-adenosyl-L-methionine; these read PRQ, HK, and IHGT. Disordered stretches follow at residues 167-189 and 201-243; these read QNLE…ATAN and KAQP…DRER. The span at 207–243 shows a compositional bias: basic and acidic residues; it reads STKEKPKCREHRTSDENSQKFRDTSEIQHTLPEDRER.

It belongs to the tRNA methyltransferase O family.

The catalysed reaction is N(6)-L-threonylcarbamoyladenosine(37) in tRNA + S-adenosyl-L-methionine = N(6)-methyl,N(6)-L-threonylcarbamoyladenosine(37) in tRNA + S-adenosyl-L-homocysteine + H(+). In terms of biological role, S-adenosyl-L-methionine-dependent methyltransferase responsible for the addition of the methyl group in the formation of N6-methyl-N6-threonylcarbamoyladenosine at position 37 (m(6)t(6)A37) of the tRNA anticodon loop of tRNA(Ser)(GCU). The methyl group of m(6)t(6)A37 may improve the efficiency of the tRNA decoding ability. May bind to tRNA. In Rattus norvegicus (Rat), this protein is tRNA (adenine(37)-N6)-methyltransferase.